We begin with the raw amino-acid sequence, 224 residues long: Oxaloacetate tautomerase FAHD2, mitochondrial (224 aa).

Residues 1–30 constitute a mitochondrion transit peptide; it reads MATSMIQRLFKQGTKIVGVGLNYASHAKEL. Positions 67, 69, and 98 each coordinate Mg(2+).

This sequence belongs to the FAH family. The cofactor is Mg(2+). Requires Mn(2+) as cofactor.

Its subcellular location is the mitochondrion. The enzyme catalyses oxaloacetate = enol-oxaloacetate. Functionally, tautomerase that converts enol-oxaloacetate, a strong inhibitor of succinate dehydrogenase, to the physiological keto form of oxaloacetate. This Arabidopsis thaliana (Mouse-ear cress) protein is Oxaloacetate tautomerase FAHD2, mitochondrial.